We begin with the raw amino-acid sequence, 426 residues long: Serine--tRNA ligase (426 aa).

Over residues 1-15 (MIDVKDLSENPDKFR) the composition is skewed to basic and acidic residues. The interval 1–20 (MIDVKDLSENPDKFRASQRA) is disordered. 228–230 (TSE) serves as a coordination point for L-serine. Residues 259–261 (RRE) and valine 275 each bind ATP. Residue glutamate 282 coordinates L-serine. 346 to 349 (ELTS) serves as a coordination point for ATP. Threonine 386 provides a ligand contact to L-serine.

It belongs to the class-II aminoacyl-tRNA synthetase family. Type-1 seryl-tRNA synthetase subfamily. As to quaternary structure, homodimer. The tRNA molecule binds across the dimer.

It localises to the cytoplasm. The catalysed reaction is tRNA(Ser) + L-serine + ATP = L-seryl-tRNA(Ser) + AMP + diphosphate + H(+). It catalyses the reaction tRNA(Sec) + L-serine + ATP = L-seryl-tRNA(Sec) + AMP + diphosphate + H(+). Its pathway is aminoacyl-tRNA biosynthesis; selenocysteinyl-tRNA(Sec) biosynthesis; L-seryl-tRNA(Sec) from L-serine and tRNA(Sec): step 1/1. Its function is as follows. Catalyzes the attachment of serine to tRNA(Ser). Is also able to aminoacylate tRNA(Sec) with serine, to form the misacylated tRNA L-seryl-tRNA(Sec), which will be further converted into selenocysteinyl-tRNA(Sec). The protein is Serine--tRNA ligase of Paenarthrobacter aurescens (strain TC1).